Consider the following 271-residue polypeptide: Cyclic AMP-dependent transcription factor ATF-1 (271 aa).

The interval 1 to 61 (MEDSHKSTTS…QKAHGILARR (61 aa)) is disordered. Residues 31-90 (QVSSLSESEESQDSSDSIGSSQKAHGILARRPSYRKILKDLSSEDTRGRKGDGENSGVSA) enclose the KID domain. Ser63 is subject to Phosphoserine; by CaMK1, CDK3, RPS6KA4 and RPS6KA5. Ser198 bears the Phosphoserine; by HIPK2 mark. Residues Lys208 and Lys215 each participate in a glycyl lysine isopeptide (Lys-Gly) (interchain with G-Cter in SUMO2) cross-link. Positions 213–271 (QLKREIRLMKNREAARECRRKKKEYVKCLENRVAVLENQNKTLIEELKTLKDLYSNKSV) constitute a bZIP domain. The tract at residues 215-239 (KREIRLMKNREAARECRRKKKEYVK) is basic motif. A leucine-zipper region spans residues 241-262 (LENRVAVLENQNKTLIEELKTL).

It belongs to the bZIP family. ATF subfamily. In terms of assembly, binds DNA as a dimer. Interacts with HIPK2 and CDK3. Interacts with MOTS-c, a peptide produced by the mitochondrially encoded 12S rRNA MT-RNR1; the interaction occurs in the nucleus following metabolic stress. Post-translationally, phosphorylated at Ser-198 by HIPK2 in response to genotoxic stress. This phosphorylation promotes transcription repression of FTH1 and other antioxidant detoxification genes. The CDK3-mediated phosphorylation at Ser-63 promotes its transactivation and transcriptional activities. Phosphorylated at Ser-63 by RPS6KA4 and RPS6KA5 in response to mitogenic or stress stimuli.

It localises to the nucleus. In terms of biological role, this protein binds the cAMP response element (CRE) (consensus: 5'-GTGACGT[AC][AG]-3'), a sequence present in many viral and cellular promoters. Binds to the Tax-responsive element (TRE) of HTLV-I. Mediates PKA-induced stimulation of CRE-reporter genes. Represses the expression of FTH1 and other antioxidant detoxification genes. Triggers cell proliferation and transformation. The chain is Cyclic AMP-dependent transcription factor ATF-1 (ATF1) from Homo sapiens (Human).